The sequence spans 203 residues: Dual-action ribosomal maturation protein DarP (203 aa).

Disordered stretches follow at residues 1–31 (MRPM…SKSQ) and 183–203 (GASD…DDEA). Residues 186-203 (DSDDEAAGDAGDDHDDEA) are compositionally biased toward acidic residues.

This sequence belongs to the DarP family.

The protein localises to the cytoplasm. Functionally, member of a network of 50S ribosomal subunit biogenesis factors which assembles along the 30S-50S interface, preventing incorrect 23S rRNA structures from forming. Promotes peptidyl transferase center (PTC) maturation. This chain is Dual-action ribosomal maturation protein DarP, found in Burkholderia cenocepacia (strain ATCC BAA-245 / DSM 16553 / LMG 16656 / NCTC 13227 / J2315 / CF5610) (Burkholderia cepacia (strain J2315)).